Here is a 165-residue protein sequence, read N- to C-terminus: Xanthine-guanine phosphoribosyltransferase (165 aa).

5-phospho-alpha-D-ribose 1-diphosphate-binding positions include R41 to G42 and D98 to T106. Residue D99 participates in Mg(2+) binding. The guanine site is built by D102 and I145. 2 residues coordinate xanthine: D102 and I145. Residues D102–T106 and W144–I145 each bind GMP.

It belongs to the purine/pyrimidine phosphoribosyltransferase family. XGPT subfamily. Homotetramer. It depends on Mg(2+) as a cofactor.

Its subcellular location is the cell inner membrane. It carries out the reaction GMP + diphosphate = guanine + 5-phospho-alpha-D-ribose 1-diphosphate. It catalyses the reaction XMP + diphosphate = xanthine + 5-phospho-alpha-D-ribose 1-diphosphate. The enzyme catalyses IMP + diphosphate = hypoxanthine + 5-phospho-alpha-D-ribose 1-diphosphate. It functions in the pathway purine metabolism; GMP biosynthesis via salvage pathway; GMP from guanine: step 1/1. It participates in purine metabolism; XMP biosynthesis via salvage pathway; XMP from xanthine: step 1/1. In terms of biological role, purine salvage pathway enzyme that catalyzes the transfer of the ribosyl-5-phosphate group from 5-phospho-alpha-D-ribose 1-diphosphate (PRPP) to the N9 position of the 6-oxopurines guanine and xanthine to form the corresponding ribonucleotides GMP (guanosine 5'-monophosphate) and XMP (xanthosine 5'-monophosphate), with the release of PPi. To a lesser extent, also acts on hypoxanthine. The chain is Xanthine-guanine phosphoribosyltransferase from Chelativorans sp. (strain BNC1).